The sequence spans 343 residues: MERVRDVSELPKAHLHLHFTGSMRPTTLLELADKHGVRLPETLTEALGRGESPKLRATDERGWFRFQRLYDAARSCLQTPEDIQRLVREAAEEDLRDGSGWLEIQVDPTSYAPRLGGLIPALEIILDAVETTVRDTGIGMRVLVAANRMKHPLDARTLARLAVRYAERGVVGFGLSNDERRGMARDFDRAFAIARDGGLLSAPHGGELTGPASVRDCLDDLEADRIGHGVRAAEDPRLLKRLADRQVTCEVCPASNVALGVYEKPEDVPLRRLFEAGVPMALGADDPLLFGSRLAAQYEIAREHHGFTDAELAELARQSVRGSAAPEEVKGKLLAGVDDWLVA.

H16, H18, and H204 together coordinate Zn(2+). H18 provides a ligand contact to substrate. Catalysis depends on E207, which acts as the Proton donor. Residue D285 coordinates Zn(2+). D286 lines the substrate pocket.

The protein belongs to the metallo-dependent hydrolases superfamily. Adenosine and AMP deaminases family. Zn(2+) serves as cofactor.

In terms of biological role, putative nucleoside deaminase. May catalyze the hydrolytic deamination of adenosine or some similar substrate and play a role in purine metabolism. This is Putative adenosine/adenine deaminase from Streptomyces coelicolor (strain ATCC BAA-471 / A3(2) / M145).